The following is a 285-amino-acid chain: Nucleotide-binding protein FMG_1084 (285 aa).

8–15 lines the ATP pocket; that stretch reads GMSGAGKS. A GTP-binding site is contributed by 59-62; that stretch reads DIRG.

This sequence belongs to the RapZ-like family.

Its function is as follows. Displays ATPase and GTPase activities. The sequence is that of Nucleotide-binding protein FMG_1084 from Finegoldia magna (strain ATCC 29328 / DSM 20472 / WAL 2508) (Peptostreptococcus magnus).